A 347-amino-acid polypeptide reads, in one-letter code: Haptoglobin (347 aa).

The first 18 residues, 1–18 (MRALGAVVTLLLWGQLFA), serve as a signal peptide directing secretion. A Sushi domain is found at 31–88 (DSCPKPPEIANGYVEHLVRYRCRQFYRLRTEGDGVYTLNDEKQWVNTAAGEKLPECEA). 4 disulfides stabilise this stretch: Cys52-Cys86, Cys90-Cys207, Cys250-Cys281, and Cys292-Cys322. Positions 103–345 (IIGGSMDAKG…LKDWVQETMA (243 aa)) constitute a Peptidase S1 domain. Asn148, Asn182, Asn256, and Asn264 each carry an N-linked (GlcNAc...) asparagine glycan. The segment at 259–264 (VPEKKN) is interaction with CD163.

Belongs to the peptidase S1 family. In terms of assembly, tetramer of two alpha and two beta chains; disulfide-linked. The hemoglobin/haptoglobin complex is composed of a haptoglobin dimer bound to two hemoglobin alpha-beta dimers. Interacts with CD163. Interacts with ERGIC3. Expressed by the liver and secreted in plasma.

It is found in the secreted. As a result of hemolysis, hemoglobin is found to accumulate in the kidney and is secreted in the urine. Haptoglobin captures, and combines with free plasma hemoglobin to allow hepatic recycling of heme iron and to prevent kidney damage. Haptoglobin also acts as an antioxidant, has antibacterial activity and plays a role in modulating many aspects of the acute phase response. Hemoglobin/haptoglobin complexes are rapidly cleared by the macrophage CD163 scavenger receptor expressed on the surface of liver Kupfer cells through an endocytic lysosomal degradation pathway. The sequence is that of Haptoglobin (Hp) from Mus saxicola (Brown spiny mouse).